Here is a 306-residue protein sequence, read N- to C-terminus: Ribonuclease Z (306 aa).

His-63, His-65, Asp-67, His-68, His-140, Asp-211, and His-269 together coordinate Zn(2+). Asp-67 acts as the Proton acceptor in catalysis.

Belongs to the RNase Z family. As to quaternary structure, homodimer. The cofactor is Zn(2+).

It carries out the reaction Endonucleolytic cleavage of RNA, removing extra 3' nucleotides from tRNA precursor, generating 3' termini of tRNAs. A 3'-hydroxy group is left at the tRNA terminus and a 5'-phosphoryl group is left at the trailer molecule.. Functionally, zinc phosphodiesterase, which displays some tRNA 3'-processing endonuclease activity. Probably involved in tRNA maturation, by removing a 3'-trailer from precursor tRNA. This chain is Ribonuclease Z, found in Listeria monocytogenes serotype 4a (strain HCC23).